We begin with the raw amino-acid sequence, 159 residues long: Eukaryotic translation initiation factor 5A (159 aa).

At Lys-55 the chain carries Hypusine.

The protein belongs to the eIF-5A family. Post-translationally, lys-55 undergoes hypusination, a unique post-translational modification that consists in the addition of a butylamino group from spermidine to lysine side chain, leading to the formation of the unusual amino acid hypusine. eIF-5As are the only known proteins to undergo this modification, which is essential for their function.

It localises to the cytoplasm. In terms of biological role, translation factor that promotes translation elongation and termination, particularly upon ribosome stalling at specific amino acid sequence contexts. Binds between the exit (E) and peptidyl (P) site of the ribosome and promotes rescue of stalled ribosome: specifically required for efficient translation of polyproline-containing peptides as well as other motifs that stall the ribosome. Acts as a ribosome quality control (RQC) cofactor by joining the RQC complex to facilitate peptidyl transfer during CAT tailing step. This Dictyostelium discoideum (Social amoeba) protein is Eukaryotic translation initiation factor 5A (eif5a).